Consider the following 254-residue polypeptide: MAIANKNIIFVAGLGGIGLDTSREIVKSGPKNLVILDRIDNPTAIAELKAINPKVTVTFYPYDVTVPLAETTKLLKTIFAQLKTVDLLINGAGILDDHQIERTIAVNFTGTVNTTTAIMEFWDKRKGGPGGVVANICSVTGFNAIYQVPVYSASKAAALSFTNSLARLAPITGVTAYSINPGITRTPLVHRFNSWLDVEPRVGELLLEHPTQTTLECAQNFVKAIEANKNGAIWQLDLGQLIAVEWTKHWDSHI.

10 to 33 (FVAGLGGIGLDTSREIVKSGPKNL) contributes to the NAD(+) binding site. Ser-138 contributes to the substrate binding site. The active-site Proton acceptor is Tyr-151.

The protein belongs to the short-chain dehydrogenases/reductases (SDR) family. In terms of assembly, homodimer.

It catalyses the reaction a primary alcohol + NAD(+) = an aldehyde + NADH + H(+). The catalysed reaction is a secondary alcohol + NAD(+) = a ketone + NADH + H(+). The polypeptide is Alcohol dehydrogenase (Adh) (Drosophila borealis (Fruit fly)).